A 640-amino-acid chain; its full sequence is ATP-dependent rRNA helicase spb4 (640 aa).

Residues 14–42 (WDAVTPALSEWVLEAMSSMGFTRMTPVQA) carry the Q motif motif. Positions 45–249 (IPLFMAHKDV…RVGLRNPVKV (205 aa)) constitute a Helicase ATP-binding domain. 58–65 (AVTGSGKT) is a binding site for ATP. Positions 197–200 (DEAD) match the DEAD box motif. A Helicase C-terminal domain is found at 283 to 437 (ALKRIVSSVQ…SISFSDADAA (155 aa)). Positions 521-629 (AYKDKQREKR…VAKAAGAKAD (109 aa)) form a coiled coil. Disordered stretches follow at residues 531–593 (RKEL…EEEK) and 607–640 (RKKN…QGFD). Over residues 577–593 (KSKQEKARWEKMTEEEK) the composition is skewed to basic and acidic residues. Residues 630–640 (GDDEEEFQGFD) show a composition bias toward acidic residues.

Belongs to the DEAD box helicase family. DDX55/SPB4 subfamily. In terms of assembly, component of pre-60S ribosomal complexes.

Its subcellular location is the nucleus. It localises to the nucleolus. It catalyses the reaction ATP + H2O = ADP + phosphate + H(+). In terms of biological role, ATP-binding RNA helicase involved in the biogenesis of 60S ribosomal subunits. Binds 90S pre-ribosomal particles and dissociates from pre-60S ribosomal particles after processing of 27SB pre-rRNA. Required for the normal formation of 18S rRNA through the processing of pre-rRNAs at sites A0, A1 and A2, and the normal formation of 25S and 5.8S rRNAs through the processing of pre-rRNAs at sites C1 and C2. The sequence is that of ATP-dependent rRNA helicase spb4 from Aspergillus fumigatus (strain ATCC MYA-4609 / CBS 101355 / FGSC A1100 / Af293) (Neosartorya fumigata).